We begin with the raw amino-acid sequence, 171 residues long: UPF0398 protein SPy_1647/M5005_Spy1353 (171 aa).

Belongs to the UPF0398 family.

This chain is UPF0398 protein SPy_1647/M5005_Spy1353, found in Streptococcus pyogenes serotype M1.